The following is a 267-amino-acid chain: Undecaprenyl-diphosphatase (267 aa).

7 helical membrane-spanning segments follow: residues 4 to 24 (LYALILGIIEGLTEFLPISST), 41 to 61 (FWKSFLIIIQLGSILAVIFVF), 69 to 89 (LDIWLKLAVGFFPTGVIGLFV), 96 to 116 (LFNGWVVVGMLIFGGVVFILI), 173 to 193 (AAEFSFLLAIPTMIIATAYSI), 207 to 227 (IPLGIGFITAFIVAVLVIKFF), and 239 to 259 (FGIYRIILGFVFFYLYYSGIL).

This sequence belongs to the UppP family.

The protein localises to the cell inner membrane. It carries out the reaction di-trans,octa-cis-undecaprenyl diphosphate + H2O = di-trans,octa-cis-undecaprenyl phosphate + phosphate + H(+). Functionally, catalyzes the dephosphorylation of undecaprenyl diphosphate (UPP). Confers resistance to bacitracin. The protein is Undecaprenyl-diphosphatase of Campylobacter jejuni subsp. jejuni serotype O:23/36 (strain 81-176).